We begin with the raw amino-acid sequence, 89 residues long: MALTQERKNELIAEFKTHETDTGSPEVQVAILTEQINTLNDHLRTHKKDHHSRRGLLKMVGQRRNLLTYLRNKDVTRYRNLVDKLGLRR.

The protein belongs to the universal ribosomal protein uS15 family. Part of the 30S ribosomal subunit. Forms a bridge to the 50S subunit in the 70S ribosome, contacting the 23S rRNA.

Functionally, one of the primary rRNA binding proteins, it binds directly to 16S rRNA where it helps nucleate assembly of the platform of the 30S subunit by binding and bridging several RNA helices of the 16S rRNA. In terms of biological role, forms an intersubunit bridge (bridge B4) with the 23S rRNA of the 50S subunit in the ribosome. The polypeptide is Small ribosomal subunit protein uS15 (Shouchella clausii (strain KSM-K16) (Alkalihalobacillus clausii)).